The chain runs to 370 residues: 3-hydroxy-3-methylglutaryl-CoA lyase, cytoplasmic (370 aa).

Gly2 is lipidated: N-myristoyl glycine. One can recognise a Pyruvate carboxyltransferase domain in the interval 78 to 345; that stretch reads VKIVEVGPRD…NTGVNLYKVM (268 aa). Arg86 lines the substrate pocket. The a divalent metal cation site is built by Asp87, His278, and His280. The active site involves Cys311. Asn320 provides a ligand contact to a divalent metal cation.

Belongs to the HMG-CoA lyase family. The cofactor is a divalent metal cation.

The protein localises to the cytoplasm. Its subcellular location is the cytosol. It localises to the endoplasmic reticulum membrane. It carries out the reaction (3S)-3-hydroxy-3-methylglutaryl-CoA = acetoacetate + acetyl-CoA. It participates in metabolic intermediate metabolism; (S)-3-hydroxy-3-methylglutaryl-CoA degradation; acetoacetate from (S)-3-hydroxy-3-methylglutaryl-CoA: step 1/1. In terms of biological role, non-mitochondrial 3-hydroxy-3-methylglutaryl-CoA lyase that catalyzes a cation-dependent cleavage of (S)-3-hydroxy-3-methylglutaryl-CoA into acetyl-CoA and acetoacetate, a key step in ketogenesis, the products of which support energy production in nonhepatic animal tissues. The chain is 3-hydroxy-3-methylglutaryl-CoA lyase, cytoplasmic (HMGCLL1) from Homo sapiens (Human).